The following is a 261-amino-acid chain: (R)-S-adenosyl-L-methionine hydrolase (261 aa).

Adenosine contacts are provided by D12, D72, and N187. (R)-S-adenosyl-L-methionine contacts are provided by N187, S231, and V239. V239 is a binding site for adenosine.

It belongs to the SAM hydrolase / SAM-dependent halogenase family.

The catalysed reaction is (R)-S-adenosyl-L-methionine + H2O = adenosine + L-methionine + H(+). With respect to regulation, activity is inhibited by chloride. Functionally, catalyzes the hydrolysis of S-adenosyl-L-methionine (SAM) into adenosine and L-methionine. Is likely stereoselective, specifically hydrolyzing (R)-S-adenosyl-L-methionine ((R)-SAM), the inactive form of the ubiquitous cofactor SAM, and not the active form of SAM, (S)-S-adenosyl-L-methionine. Probaly plays a role in preventing accumulation of (R)-S-adenosyl-L-methionine in cells; maintenance of (S)-S-denosyl-L-methionine homochirality is important for cellular health given that the (R)-form is largely inactive as a methyl donor and can function as an inhibitor of methyltransferases. Shows very slow iodinase activity in vitro. In Salinispora arenicola (strain CNS-205), this protein is (R)-S-adenosyl-L-methionine hydrolase.